We begin with the raw amino-acid sequence, 292 residues long: Quinolinate synthase (292 aa).

2 residues coordinate iminosuccinate: histidine 8 and serine 25. Cysteine 70 provides a ligand contact to [4Fe-4S] cluster. Residues 96 to 98 (YVN) and serine 113 contribute to the iminosuccinate site. Cysteine 158 contributes to the [4Fe-4S] cluster binding site. Residues 184-186 (HPE) and threonine 201 contribute to the iminosuccinate site. Cysteine 244 is a binding site for [4Fe-4S] cluster.

This sequence belongs to the quinolinate synthase family. Type 2 subfamily. [4Fe-4S] cluster serves as cofactor.

The protein localises to the cytoplasm. The catalysed reaction is iminosuccinate + dihydroxyacetone phosphate = quinolinate + phosphate + 2 H2O + H(+). It participates in cofactor biosynthesis; NAD(+) biosynthesis; quinolinate from iminoaspartate: step 1/1. In terms of biological role, catalyzes the condensation of iminoaspartate with dihydroxyacetone phosphate to form quinolinate. The polypeptide is Quinolinate synthase (nadA) (Methanopyrus kandleri (strain AV19 / DSM 6324 / JCM 9639 / NBRC 100938)).